Reading from the N-terminus, the 236-residue chain is Leucyl/phenylalanyl-tRNA--protein transferase (236 aa).

The protein belongs to the L/F-transferase family.

The protein resides in the cytoplasm. The catalysed reaction is N-terminal L-lysyl-[protein] + L-leucyl-tRNA(Leu) = N-terminal L-leucyl-L-lysyl-[protein] + tRNA(Leu) + H(+). It carries out the reaction N-terminal L-arginyl-[protein] + L-leucyl-tRNA(Leu) = N-terminal L-leucyl-L-arginyl-[protein] + tRNA(Leu) + H(+). The enzyme catalyses L-phenylalanyl-tRNA(Phe) + an N-terminal L-alpha-aminoacyl-[protein] = an N-terminal L-phenylalanyl-L-alpha-aminoacyl-[protein] + tRNA(Phe). Functionally, functions in the N-end rule pathway of protein degradation where it conjugates Leu, Phe and, less efficiently, Met from aminoacyl-tRNAs to the N-termini of proteins containing an N-terminal arginine or lysine. This is Leucyl/phenylalanyl-tRNA--protein transferase from Shewanella putrefaciens (strain CN-32 / ATCC BAA-453).